A 345-amino-acid chain; its full sequence is Mannonate dehydratase 2 (345 aa).

Belongs to the mannonate dehydratase family. Fe(2+) serves as cofactor. Requires Mn(2+) as cofactor.

The catalysed reaction is D-mannonate = 2-dehydro-3-deoxy-D-gluconate + H2O. Its pathway is carbohydrate metabolism; pentose and glucuronate interconversion. Functionally, catalyzes the dehydration of D-mannonate. This is Mannonate dehydratase 2 (uxuA2) from Halalkalibacterium halodurans (strain ATCC BAA-125 / DSM 18197 / FERM 7344 / JCM 9153 / C-125) (Bacillus halodurans).